We begin with the raw amino-acid sequence, 948 residues long: Bifunctional glutamine synthetase adenylyltransferase/adenylyl-removing enzyme (948 aa).

The interval 1-445 (MAPPPDTSGS…IFTEVIAEPP (445 aa)) is adenylyl removase. Residues 451–948 (EPLLDGGEAE…WKQIIEAPVF (498 aa)) form an adenylyl transferase region.

The protein belongs to the GlnE family. Requires Mg(2+) as cofactor.

The catalysed reaction is [glutamine synthetase]-O(4)-(5'-adenylyl)-L-tyrosine + phosphate = [glutamine synthetase]-L-tyrosine + ADP. The enzyme catalyses [glutamine synthetase]-L-tyrosine + ATP = [glutamine synthetase]-O(4)-(5'-adenylyl)-L-tyrosine + diphosphate. Its function is as follows. Involved in the regulation of glutamine synthetase GlnA, a key enzyme in the process to assimilate ammonia. When cellular nitrogen levels are high, the C-terminal adenylyl transferase (AT) inactivates GlnA by covalent transfer of an adenylyl group from ATP to specific tyrosine residue of GlnA, thus reducing its activity. Conversely, when nitrogen levels are low, the N-terminal adenylyl removase (AR) activates GlnA by removing the adenylyl group by phosphorolysis, increasing its activity. The regulatory region of GlnE binds the signal transduction protein PII (GlnB) which indicates the nitrogen status of the cell. The polypeptide is Bifunctional glutamine synthetase adenylyltransferase/adenylyl-removing enzyme (Methylococcus capsulatus (strain ATCC 33009 / NCIMB 11132 / Bath)).